The chain runs to 603 residues: MVNNMTDLTAQDAVLPVWQTRDHLDDPVIGELRNRFGPDAFTVQATRTGVPVVWVKREQLLEVGEFLRKLPKPYVMLYDLHGMDERLRTHRNGLPAADFSVFYHLLSIDRNRDIMLKVALSENDLNVPTFTRLFPNANWYERETWEMFGITFTGHPNLRRIMMPPTWEGHPLRKDYPARATEFDPFTLTKQKEELEMEALTFKPEEWGMKRGNDTEDFMFLNLGPNHPSAHGAFRIILQLDGEEIVDCVPDIGYHHRGAEKMGERQSWHSYIPYTDRVEYLGGCVNEMPYVLAVEKLAGIQVPERVEVIRVMLSELFRINSHLLYISTFIQDVGAMTPVFFAFTDRQKIYDLVEAITGFRMHPAWFRIGGVAHDLPRGWDRLLKEFLEWMPKRLDSYVKAALKNTILKGRSQGVAAYDAKEALAWGTTGAGLRATGIDFDVRKARPYSGYQNFEFEVPVGGGISDCYTRVMLKVEEVRQSLRILEQCLKNMPEGPFKADHPLTTPPPKERTLQHIETLITHFLQVSWGPVMPANESFQMIEATKGINSYYLTSDGSTMSYRTRVRTPSFPHLQQIPSVIRGSLVSDLIVYLGSIDFVMSDVDR.

The interval 1–193 (MVNNMTDLTA…DPFTLTKQKE (193 aa)) is NADH dehydrogenase I subunit C. The interval 217-603 (DFMFLNLGPN…IDFVMSDVDR (387 aa)) is NADH dehydrogenase I subunit D.

It in the N-terminal section; belongs to the complex I 30 kDa subunit family. In the C-terminal section; belongs to the complex I 49 kDa subunit family. NDH-1 is composed of 13 different subunits. Subunits NuoB, CD, E, F, and G constitute the peripheral sector of the complex.

It localises to the cell inner membrane. It catalyses the reaction a quinone + NADH + 5 H(+)(in) = a quinol + NAD(+) + 4 H(+)(out). NDH-1 shuttles electrons from NADH, via FMN and iron-sulfur (Fe-S) centers, to quinones in the respiratory chain. The immediate electron acceptor for the enzyme in this species is believed to be ubiquinone. Couples the redox reaction to proton translocation (for every two electrons transferred, four hydrogen ions are translocated across the cytoplasmic membrane), and thus conserves the redox energy in a proton gradient. In Cronobacter sakazakii (strain ATCC BAA-894) (Enterobacter sakazakii), this protein is NADH-quinone oxidoreductase subunit C/D.